Reading from the N-terminus, the 142-residue chain is Large ribosomal subunit protein uL11 (142 aa).

A2 bears the N,N,N-trimethylalanine mark. An N6,N6,N6-trimethyllysine mark is found at K4 and K40.

It belongs to the universal ribosomal protein uL11 family. Part of the ribosomal stalk of the 50S ribosomal subunit. Interacts with L10 and the large rRNA to form the base of the stalk. L10 forms an elongated spine to which L12 dimers bind in a sequential fashion forming a multimeric L10(L12)X complex. One or more lysine residues are methylated.

Its function is as follows. Forms part of the ribosomal stalk which helps the ribosome interact with GTP-bound translation factors. This chain is Large ribosomal subunit protein uL11, found in Shigella flexneri.